The chain runs to 23 residues: Phospholipase A2 homolog 4 (23 aa).

This sequence belongs to the phospholipase A2 family. Group II subfamily. K49 sub-subfamily. In terms of assembly, homodimer; non-covalently linked (probable alternative/compact dimer conformation in solution). In terms of tissue distribution, expressed by the venom gland.

It is found in the secreted. Snake venom phospholipase A2 homolog that lacks enzymatic activity. Induces acute muscle damage after intramuscular injection in mice and disrupts negatively charged liposomes but not positively charged ones. Also exerts a weak anticoagulant effect only at concentrations of 40 ug/ml or higher. A model of myotoxic mechanism has been proposed: an apo Lys49-PLA2 is activated by the entrance of a hydrophobic molecule (e.g. fatty acid) at the hydrophobic channel of the protein leading to a reorientation of a monomer. This reorientation causes a transition between 'inactive' to 'active' states, causing alignment of C-terminal and membrane-docking sites (MDoS) side-by-side and putting the membrane-disruption sites (MDiS) in the same plane, exposed to solvent and in a symmetric position for both monomers. The MDoS region stabilizes the toxin on membrane by the interaction of charged residues with phospholipid head groups. Subsequently, the MDiS region destabilizes the membrane with penetration of hydrophobic residues. This insertion causes a disorganization of the membrane, allowing an uncontrolled influx of ions (i.e. calcium and sodium), and eventually triggering irreversible intracellular alterations and cell death. This Bothrops asper (Terciopelo) protein is Phospholipase A2 homolog 4.